The sequence spans 204 residues: FMN-dependent NADH:quinone oxidoreductase 1 (204 aa).

Residues S14, 20 to 22, and 99 to 102 each bind FMN; these read SMS and MYNF.

It belongs to the azoreductase type 1 family. Homodimer. FMN is required as a cofactor.

It carries out the reaction 2 a quinone + NADH + H(+) = 2 a 1,4-benzosemiquinone + NAD(+). The catalysed reaction is N,N-dimethyl-1,4-phenylenediamine + anthranilate + 2 NAD(+) = 2-(4-dimethylaminophenyl)diazenylbenzoate + 2 NADH + 2 H(+). In terms of biological role, quinone reductase that provides resistance to thiol-specific stress caused by electrophilic quinones. Also exhibits azoreductase activity. Catalyzes the reductive cleavage of the azo bond in aromatic azo compounds to the corresponding amines. This Hahella chejuensis (strain KCTC 2396) protein is FMN-dependent NADH:quinone oxidoreductase 1.